The sequence spans 279 residues: uncharacterized protein (279 aa).

The N-terminal stretch at 1 to 21 (MKIIRTLFLLLIAVYGSSVVA) is a signal peptide.

The protein to E.coli YfcO.

This is an uncharacterized protein from Salmonella typhimurium (strain LT2 / SGSC1412 / ATCC 700720).